Here is a 67-residue protein sequence, read N- to C-terminus: ATP synthase F(0) complex subunit 8 (67 aa).

Residues 8–24 (TWFITIISSMATLFILF) form a helical membrane-spanning segment. Lys54 carries the N6-acetyllysine; alternate modification. An N6-succinyllysine; alternate modification is found at Lys54. Lys57 is subject to N6-acetyllysine.

Belongs to the ATPase protein 8 family. As to quaternary structure, component of the ATP synthase complex composed at least of ATP5F1A/subunit alpha, ATP5F1B/subunit beta, ATP5MC1/subunit c (homooctomer), MT-ATP6/subunit a, MT-ATP8/subunit 8, ATP5ME/subunit e, ATP5MF/subunit f, ATP5MG/subunit g, ATP5MK/subunit k, ATP5MJ/subunit j, ATP5F1C/subunit gamma, ATP5F1D/subunit delta, ATP5F1E/subunit epsilon, ATP5PF/subunit F6, ATP5PB/subunit b, ATP5PD/subunit d, ATP5PO/subunit OSCP. ATP synthase complex consists of a soluble F(1) head domain (subunits alpha(3) and beta(3)) - the catalytic core - and a membrane F(0) domain - the membrane proton channel (subunits c, a, 8, e, f, g, k and j). These two domains are linked by a central stalk (subunits gamma, delta, and epsilon) rotating inside the F1 region and a stationary peripheral stalk (subunits F6, b, d, and OSCP). Interacts with PRICKLE3.

It localises to the mitochondrion membrane. Subunit 8, of the mitochondrial membrane ATP synthase complex (F(1)F(0) ATP synthase or Complex V) that produces ATP from ADP in the presence of a proton gradient across the membrane which is generated by electron transport complexes of the respiratory chain. ATP synthase complex consist of a soluble F(1) head domain - the catalytic core - and a membrane F(1) domain - the membrane proton channel. These two domains are linked by a central stalk rotating inside the F(1) region and a stationary peripheral stalk. During catalysis, ATP synthesis in the catalytic domain of F(1) is coupled via a rotary mechanism of the central stalk subunits to proton translocation. In vivo, can only synthesize ATP although its ATP hydrolase activity can be activated artificially in vitro. Part of the complex F(0) domain. The chain is ATP synthase F(0) complex subunit 8 from Rattus norvegicus (Rat).